The sequence spans 380 residues: Alkaline protease (380 aa).

An N-terminal signal peptide occupies residues 1–27 (MKKPLGKIVASTALLISVAFSSSIASA). A propeptide spanning residues 28–111 (AEEAKEKYLI…IEEDAEVTTM (84 aa)) is cleaved from the precursor. The 78-residue stretch at 34-111 (KYLIGFNEQE…IEEDAEVTTM (78 aa)) folds into the Inhibitor I9 domain. Gln-113 lines the Ca(2+) pocket. The 264-residue stretch at 116 to 379 (PWGISRVQAP…SGLVNAEAAT (264 aa)) folds into the Peptidase S8 domain. Asp-143 acts as the Charge relay system in catalysis. Asp-151 provides a ligand contact to Ca(2+). Residue His-173 is the Charge relay system of the active site. Positions 184, 186, 188, 190, 274, 276, and 279 each coordinate Ca(2+). The active-site Charge relay system is Ser-326.

This sequence belongs to the peptidase S8 family. Ca(2+) is required as a cofactor.

It localises to the secreted. The polypeptide is Alkaline protease (Shouchella clausii (Alkalihalobacillus clausii)).